Reading from the N-terminus, the 746-residue chain is Serine/threonine-protein kinase SMU1 (746 aa).

Disordered regions lie at residues 1–138 (MSLV…DTLH) and 155–212 (QRSH…GSRN). 2 stretches are compositionally biased toward low complexity: residues 15-54 (SSAN…SSTT) and 85-105 (SVSS…PSSA). Polar residues-rich tracts occupy residues 106–121 (LPWS…STAT), 128–138 (RSNTAGPDTLH), and 156–176 (RSHS…SSPT). Positions 194–203 (PSRDRERSRD) are enriched in basic and acidic residues. Residues 237–250 (ISTPYDPVHLTHVG) enclose the CRIB domain. The disordered stretch occupies residues 301-451 (GGSDVWKKMG…RRETKKSTIK (151 aa)). Residues 370–380 (PPSNASTSSAD) show a composition bias toward polar residues. The segment covering 414 to 430 (SPASRAPDAPAAVSAAS) has biased composition (low complexity). The 252-residue stretch at 472 to 723 (YRSLQKIGQG…ALGMLAHPFL (252 aa)) folds into the Protein kinase domain. ATP is bound by residues 478–486 (IGQGASGGV) and lysine 501. Residue aspartate 591 is the Proton acceptor of the active site.

It belongs to the protein kinase superfamily. STE Ser/Thr protein kinase family. STE20 subfamily.

Its subcellular location is the cytoplasm. The protein localises to the nucleus. The catalysed reaction is L-seryl-[protein] + ATP = O-phospho-L-seryl-[protein] + ADP + H(+). It catalyses the reaction L-threonyl-[protein] + ATP = O-phospho-L-threonyl-[protein] + ADP + H(+). MAP4K component of the MAPK pathway required for the mating pheromone response and the regulation of cell polarity and cell cycle. Phosphorylates histone H2B to form H2BS10ph. The sequence is that of Serine/threonine-protein kinase SMU1 (SMU1) from Mycosarcoma maydis (Corn smut fungus).